The following is a 231-amino-acid chain: Putative N-acetylmannosamine-6-phosphate 2-epimerase (231 aa).

Belongs to the NanE family.

It catalyses the reaction an N-acyl-D-glucosamine 6-phosphate = an N-acyl-D-mannosamine 6-phosphate. It participates in amino-sugar metabolism; N-acetylneuraminate degradation; D-fructose 6-phosphate from N-acetylneuraminate: step 3/5. Converts N-acetylmannosamine-6-phosphate (ManNAc-6-P) to N-acetylglucosamine-6-phosphate (GlcNAc-6-P). The polypeptide is Putative N-acetylmannosamine-6-phosphate 2-epimerase (Listeria monocytogenes serotype 4b (strain F2365)).